Here is a 310-residue protein sequence, read N- to C-terminus: MILTLTLNPSVDISYPLTALKLDDVNRVQEVSKTAGGKGLNVTRVLAQVGEPVLASGFIGGELGQFIAKKLDHADIKHAFYNIKGETRNCIAILHEGQQTEILEQGPEIDNQEAAGFIKHFEQLLEKVEAVAISGSLPKGLNQDYYAQIIERCQNKGVPVILDCSGATLQTVLENPYKPTVIKPNISELYQLLNQPLDESLESLKQAVSQPLFEGIEWIIVSLGAQGAFAKHNHTFYRVNIPTINVLNPVGSGDSTVAGITSAILNHENDHDLLKKANTLGMLNAQEAQTGYVNLNNYDELFNQIEVLEV.

It belongs to the carbohydrate kinase PfkB family. LacC subfamily.

It catalyses the reaction D-tagatofuranose 6-phosphate + ATP = D-tagatofuranose 1,6-bisphosphate + ADP + H(+). Its pathway is carbohydrate metabolism; D-tagatose 6-phosphate degradation; D-glyceraldehyde 3-phosphate and glycerone phosphate from D-tagatose 6-phosphate: step 1/2. The chain is Tagatose-6-phosphate kinase from Staphylococcus aureus (strain Mu3 / ATCC 700698).